Here is a 219-residue protein sequence, read N- to C-terminus: Probable GTP-binding protein EngB (219 aa).

The EngB-type G domain occupies 24 to 207; that stretch reads VQPEIAFAGR…HELIESWVRP (184 aa). GTP is bound by residues 32–39, 59–63, 81–84, 148–151, and 186–188; these read GRSNAGKS, GRTQH, DLPG, TKCD, and FSA. Mg(2+)-binding residues include Ser-39 and Thr-61.

The protein belongs to the TRAFAC class TrmE-Era-EngA-EngB-Septin-like GTPase superfamily. EngB GTPase family. Requires Mg(2+) as cofactor.

Functionally, necessary for normal cell division and for the maintenance of normal septation. This Burkholderia ambifaria (strain MC40-6) protein is Probable GTP-binding protein EngB.